A 334-amino-acid chain; its full sequence is Type IV inositol polyphosphate 5-phosphatase 11 (334 aa).

Catalytic stretches follow at residues 206-222 (DLTV…QDVS) and 282-297 (KIRV…FKIQ).

Belongs to the inositol polyphosphate 5-phosphatase family. In terms of tissue distribution, expressed ubiquitously.

The protein localises to the cell membrane. The enzyme catalyses a 1,2-diacyl-sn-glycero-3-phospho-(1D-myo-inositol-4,5-bisphosphate) + H2O = a 1,2-diacyl-sn-glycero-3-phospho-(1D-myo-inositol 4-phosphate) + phosphate. The catalysed reaction is a 1,2-diacyl-sn-glycero-3-phospho-(1D-myo-inositol-3,4,5-trisphosphate) + H2O = a 1,2-diacyl-sn-glycero-3-phospho-(1D-myo-inositol-3,4-bisphosphate) + phosphate. Its function is as follows. Has phosphatase activity toward PtdIns(4,5)P2, and in vitro toward PtdIns(3,5)P2 and PtdIns(3,4,5)P3. Cannot dephosphorylate PtdIns(5)P, Ins(1,4,5)P3 and Ins(1,3,4,5)P4. This is Type IV inositol polyphosphate 5-phosphatase 11 from Arabidopsis thaliana (Mouse-ear cress).